The chain runs to 236 residues: Rho-related GTP-binding protein RhoV (236 aa).

A disordered region spans residues 1–27; sequence MPPRELSEAEPPPLPASTPPPRRRSAP. A compositionally biased stretch (pro residues) spans 10–20; sequence EPPPLPASTPP. A Phosphoserine modification is found at serine 25. GTP is bound by residues 38–45, 85–89, and 143–146; these read GDGAVGKS, DTAGQ, and TQAD. A lipid anchor (S-palmitoyl cysteine) is attached at cysteine 234.

The protein belongs to the small GTPase superfamily. Rho family. As to quaternary structure, interacts with PAK2. It depends on Mg(2+) as a cofactor.

The protein resides in the cell membrane. It is found in the endosome membrane. Plays a role in the control of the actin cytoskeleton via activation of the JNK pathway. This Mus musculus (Mouse) protein is Rho-related GTP-binding protein RhoV.